A 58-amino-acid chain; its full sequence is Dortoxin (58 aa).

Residues 3–58 form the LCN-type CS-alpha/beta domain; the sequence is VPGNYPLDKDGNTYTCLKLGENKDCQKVCKLHGVQYGYCYAFECWCKEYLDDKDSV. 3 disulfide bridges follow: Cys18–Cys41, Cys27–Cys46, and Cys31–Cys48.

As to expression, expressed by the venom gland.

Its subcellular location is the secreted. Binds to sodium channels (Nav) and affects the channel activation process. In mice, causes hyperactivity that persists until death. The polypeptide is Dortoxin (Parabuthus transvaalicus (Transvaal thick-tailed scorpion)).